A 376-amino-acid polypeptide reads, in one-letter code: 1-acyl-sn-glycerol-3-phosphate acyltransferase gamma (376 aa).

The Cytoplasmic segment spans residues 1-124; sequence MGLLAFLKTQ…LGSSKVLAKK (124 aa). The HXXXXD motif motif lies at 96-101; the sequence is HNFEID. A helical membrane pass occupies residues 125–145; that stretch reads ELLYVPLIGWTWYFLEIVFCK. Topologically, residues 146–316 are lumenal; sequence RKWEEDRDTV…TLLNFLSWAT (171 aa). Residues 317-339 form a helical membrane-spanning segment; sequence ILLSPLFSFVLGVFASGSPLLIL. The Cytoplasmic portion of the chain corresponds to 340 to 376; sequence TFLGFVGAASFGVRRLIGVTEIEKGSSYGNQEFKKKE.

This sequence belongs to the 1-acyl-sn-glycerol-3-phosphate acyltransferase family.

The protein resides in the endoplasmic reticulum membrane. Its subcellular location is the nucleus envelope. The catalysed reaction is a 1-acyl-sn-glycero-3-phosphate + an acyl-CoA = a 1,2-diacyl-sn-glycero-3-phosphate + CoA. It catalyses the reaction pentadecanoyl-CoA + 1-(9Z-octadecenoyl)-sn-glycero-3-phosphate = 1-(9Z)-octadecenoyl-2-pentadecanoyl-sn-glycero-3-phosphate + CoA. The enzyme catalyses heptadecanoyl-CoA + 1-(9Z-octadecenoyl)-sn-glycero-3-phosphate = 1-(9Z)-octadecenoyl-2-heptadecanoyl-sn-glycero-3-phosphate + CoA. It carries out the reaction 1-(9Z-octadecenoyl)-sn-glycero-3-phosphate + octadecanoyl-CoA = 1-(9Z-octadecenoyl)-2-octadecanoyl-sn-glycero-3-phosphate + CoA. The catalysed reaction is nonadecanoyl-CoA + 1-(9Z-octadecenoyl)-sn-glycero-3-phosphate = 1-(9Z)-octadecenoyl-2-nonadecanoyl-sn-glycero-3-phosphate + CoA. It catalyses the reaction 1-(9Z-octadecenoyl)-sn-glycero-3-phosphate + (5Z,8Z,11Z,14Z)-eicosatetraenoyl-CoA = 1-(9Z)-octadecenoyl-2-(5Z,8Z,11Z,14Z)-eicosatetraenoyl-sn-glycero-3-phosphate + CoA. The enzyme catalyses 1-(9Z-octadecenoyl)-sn-glycero-3-phosphate + (9Z)-octadecenoyl-CoA = 1,2-di-(9Z-octadecenoyl)-sn-glycero-3-phosphate + CoA. It carries out the reaction 1-(9Z-octadecenoyl)-sn-glycero-3-phosphate + (9Z,12Z)-octadecadienoyl-CoA = 1-(9Z)-octadecenoyl-2-(9Z,12Z)-octadecadienoyl-sn-glycero-3-phosphate + CoA. The catalysed reaction is 1-(9Z-octadecenoyl)-sn-glycero-3-phosphocholine + (5Z,8Z,11Z,14Z)-eicosatetraenoyl-CoA = 1-(9Z)-octadecenoyl-2-(5Z,8Z,11Z,14Z)-icosatetraenoyl-sn-glycero-3-phosphocholine + CoA. It catalyses the reaction 1-(9Z-octadecenoyl)-sn-glycero-3-phospho-(1D-myo-inositol) + (5Z,8Z,11Z,14Z)-eicosatetraenoyl-CoA = 1-(9Z-octadecenoyl)-2-(5Z,8Z,11Z,14Z-eicosatetraenoyl)-sn-glycero-3-phospho-1D-myo-inositol + CoA. The enzyme catalyses 1-(9Z-octadecenoyl)-sn-glycero-3-phospho-L-serine + (5Z,8Z,11Z,14Z)-eicosatetraenoyl-CoA = 1-(9Z-octadecenoyl)-2-(5Z,8Z,11Z,14Z-eicosatetraenoyl)-sn-glycero-3-phospho-L-serine + CoA. It carries out the reaction 1-hexadecanoyl-sn-glycero-3-phosphate + (9Z)-octadecenoyl-CoA = 1-hexadecanoyl-2-(9Z-octadecenoyl)-sn-glycero-3-phosphate + CoA. The catalysed reaction is 1-hexadecanoyl-sn-glycero-3-phosphate + (5Z,8Z,11Z,14Z)-eicosatetraenoyl-CoA = 1-hexadecanoyl-2-(5Z,8Z,11Z,14Z-eicosatetraenoyl)-sn-glycero-3-phosphate + CoA. It catalyses the reaction 1-heptadecanoyl-sn-glycero-3-phosphate + (5Z,8Z,11Z,14Z)-eicosatetraenoyl-CoA = 1-heptadecanoyl-2-(5Z,8Z,11Z,14Z)-eicosatetraenoyl-sn-glycero-3-phosphate + CoA. The enzyme catalyses 1-octadecanoyl-sn-glycero-3-phosphate + (9Z)-octadecenoyl-CoA = 1-octadecanoyl-2-(9Z-octadecenoyl)-sn-glycero-3-phosphate + CoA. It carries out the reaction 1-octadecanoyl-sn-glycero-3-phosphate + (5Z,8Z,11Z,14Z)-eicosatetraenoyl-CoA = 1-octadecanoyl-2-(5Z,8Z,11Z,14Z-eicosatetraenoyl)-sn-glycero-3-phosphate + CoA. The catalysed reaction is 1-(9Z-octadecenoyl)-sn-glycero-3-phosphate + hexadecanoyl-CoA = 1-hexadecanoyl-2-(9Z-octadecenoyl)-sn-glycero-3-phosphate + CoA. It catalyses the reaction 1-O-(9Z-octadecenyl)-sn-glycero-3-phosphate + (5Z,8Z,11Z,14Z)-eicosatetraenoyl-CoA = 1-O-(9Z-octadecenyl)-2-(5Z,8Z,11Z,14Z-eicosatetraenoyl)-sn-glycero-3-phosphate + CoA. The enzyme catalyses a 1-acyl-sn-glycero-3-phospho-(1D-myo-inositol) + (5Z,8Z,11Z,14Z)-eicosatetraenoyl-CoA = a 1-acyl-2-(5Z,8Z,11Z,14Z-eicosatetraenoyl)-sn-glycero-3-phospho-(1D-myo-inositol) + CoA. The protein operates within phospholipid metabolism; CDP-diacylglycerol biosynthesis; CDP-diacylglycerol from sn-glycerol 3-phosphate: step 2/3. Functionally, converts 1-acyl-sn-glycerol-3-phosphate (lysophosphatidic acid or LPA) into 1,2-diacyl-sn-glycerol-3-phosphate (phosphatidic acid or PA) by incorporating an acyl moiety at the sn-2 position of the glycerol backbone. Acts on LPA containing saturated or unsaturated fatty acids C16:0-C20:4 at the sn-1 position using C18:1, C20:4 or C18:2-CoA as the acyl donor. Also acts on lysophosphatidylcholine, lysophosphatidylinositol and lysophosphatidylserine using C18:1 or C20:4-CoA. Has a preference for arachidonoyl-CoA as a donor. Also has a modest lysophosphatidylinositol acyltransferase (LPIAT) activity, converts lysophosphatidylinositol (LPI) into phosphatidylinositol. The sequence is that of 1-acyl-sn-glycerol-3-phosphate acyltransferase gamma (AGPAT3) from Pongo abelii (Sumatran orangutan).